Reading from the N-terminus, the 401-residue chain is Argininosuccinate synthase (401 aa).

9–17 (AYSGGLDTS) contacts ATP. Tyr-88 lines the L-citrulline pocket. Residue Gly-118 coordinates ATP. Thr-120, Asn-124, and Asp-125 together coordinate L-aspartate. Asn-124 contributes to the L-citrulline binding site. The L-citrulline site is built by Arg-128, Ser-176, Ser-185, Glu-261, and Tyr-273.

This sequence belongs to the argininosuccinate synthase family. Type 1 subfamily. In terms of assembly, homotetramer.

The protein resides in the cytoplasm. The enzyme catalyses L-citrulline + L-aspartate + ATP = 2-(N(omega)-L-arginino)succinate + AMP + diphosphate + H(+). It participates in amino-acid biosynthesis; L-arginine biosynthesis; L-arginine from L-ornithine and carbamoyl phosphate: step 2/3. In Symbiobacterium thermophilum (strain DSM 24528 / JCM 14929 / IAM 14863 / T), this protein is Argininosuccinate synthase.